We begin with the raw amino-acid sequence, 315 residues long: DNA-directed RNA polymerase subunit alpha (315 aa).

Residues 1 to 228 (MLEIEKPKIE…EHFKLFMTLT (228 aa)) form an alpha N-terminal domain (alpha-NTD) region. Residues 245–315 (KEKVLEMTIE…LGLSLKLNDE (71 aa)) are alpha C-terminal domain (alpha-CTD).

It belongs to the RNA polymerase alpha chain family. As to quaternary structure, homodimer. The RNAP catalytic core consists of 2 alpha, 1 beta, 1 beta' and 1 omega subunit. When a sigma factor is associated with the core the holoenzyme is formed, which can initiate transcription.

The catalysed reaction is RNA(n) + a ribonucleoside 5'-triphosphate = RNA(n+1) + diphosphate. DNA-dependent RNA polymerase catalyzes the transcription of DNA into RNA using the four ribonucleoside triphosphates as substrates. In Clostridium acetobutylicum (strain ATCC 824 / DSM 792 / JCM 1419 / IAM 19013 / LMG 5710 / NBRC 13948 / NRRL B-527 / VKM B-1787 / 2291 / W), this protein is DNA-directed RNA polymerase subunit alpha.